The sequence spans 399 residues: Elongation factor Tu (399 aa).

A tr-type G domain is found at 10–207; it reads KTHMNVGTIG…AVDSYFPDPV (198 aa). The G1 stretch occupies residues 19-26; it reads GHIDHGKT. 19-26 serves as a coordination point for GTP; that stretch reads GHIDHGKT. Position 26 (T26) interacts with Mg(2+). Residues 60 to 64 are G2; the sequence is GITIN. The G3 stretch occupies residues 81–84; the sequence is DCPG. Residues 81-85 and 136-139 contribute to the GTP site; these read DCPGH and NKVD. Residues 136–139 are G4; it reads NKVD. A G5 region spans residues 174–176; that stretch reads SAL.

The protein belongs to the TRAFAC class translation factor GTPase superfamily. Classic translation factor GTPase family. EF-Tu/EF-1A subfamily. As to quaternary structure, monomer.

It localises to the cytoplasm. The enzyme catalyses GTP + H2O = GDP + phosphate + H(+). Functionally, GTP hydrolase that promotes the GTP-dependent binding of aminoacyl-tRNA to the A-site of ribosomes during protein biosynthesis. The sequence is that of Elongation factor Tu from Petrotoga mobilis (strain DSM 10674 / SJ95).